The following is a 414-amino-acid chain: Coenzyme A biosynthesis bifunctional protein CoaBC (414 aa).

The interval 1-191 (MSARKRIVVG…ALPYDMAGVK (191 aa)) is phosphopantothenoylcysteine decarboxylase. The interval 192–414 (ALVTAGGTRE…IAAFLKSQDG (223 aa)) is phosphopantothenate--cysteine ligase. Residues 275 to 277 (MAA), Asp281, Lys291, 293 to 294 (KK), 308 to 311 (DDVL), Phe332, Lys350, and Lys354 contribute to the CTP site.

It in the N-terminal section; belongs to the HFCD (homo-oligomeric flavin containing Cys decarboxylase) superfamily. In the C-terminal section; belongs to the PPC synthetase family. As to quaternary structure, homododecamer. Mg(2+) serves as cofactor. FMN is required as a cofactor.

The enzyme catalyses N-[(R)-4-phosphopantothenoyl]-L-cysteine + H(+) = (R)-4'-phosphopantetheine + CO2. It carries out the reaction (R)-4'-phosphopantothenate + L-cysteine + CTP = N-[(R)-4-phosphopantothenoyl]-L-cysteine + CMP + diphosphate + H(+). The protein operates within cofactor biosynthesis; coenzyme A biosynthesis; CoA from (R)-pantothenate: step 2/5. It functions in the pathway cofactor biosynthesis; coenzyme A biosynthesis; CoA from (R)-pantothenate: step 3/5. With respect to regulation, two related chemical scaffolds that potently inhibit the activity of the CoaB moiety of CoaBC through a cryptic allosteric site that sits in the dimer interface region of the CoaB enzyme were identified. Catalyzes two sequential steps in the biosynthesis of coenzyme A. In the first step cysteine is conjugated to 4'-phosphopantothenate to form 4-phosphopantothenoylcysteine. In the second step the latter compound is decarboxylated to form 4'-phosphopantotheine. This Mycolicibacterium smegmatis (strain ATCC 700084 / mc(2)155) (Mycobacterium smegmatis) protein is Coenzyme A biosynthesis bifunctional protein CoaBC.